Here is a 76-residue protein sequence, read N- to C-terminus: MKLIIFTGLALFLLVSLIDVEAQNEGACIPHGSVCTTNHAGCCSKLSCDCYRRFEKGVEKGQKCWCIETGVTFSKE.

Positions 1-22 are cleaved as a signal peptide; that stretch reads MKLIIFTGLALFLLVSLIDVEA. Residues 23–26 constitute a propeptide that is removed on maturation; sequence QNEG.

The protein belongs to the neurotoxin 19 (CSTX) family. 07 (U7-Lctx) subfamily. Contains 4 disulfide bonds. As to expression, expressed by the venom gland.

It localises to the secreted. In Lycosa singoriensis (Wolf spider), this protein is U7-lycotoxin-Ls1c.